Here is a 219-residue protein sequence, read N- to C-terminus: uncharacterized protein (219 aa).

2 helical membrane passes run 81–101 (VVKW…NYLI) and 168–188 (PIME…TALV).

Its subcellular location is the membrane. This is an uncharacterized protein from Saccharomyces cerevisiae (strain ATCC 204508 / S288c) (Baker's yeast).